The chain runs to 274 residues: MAIVKCKPTSPGRRHLVKVVNKELHTGKPYAPLLDTKSKSGGRNNNGRITVRHIGGGHKQHYRIVDFKRLKDGIPAKVERLEYDPNRSANIALVLYADGERRYILAPKGLSAGDSILSGVGAPIKPGNTMPLRNIPLGSVIHAIELKPGKGAQIARAAGTYAQLVAKDGAYVTLRLRSGEMRKIESDCRATLGEIGNSEHMLRSLGKAGASRWRGVRPTVRGVAMNPVDHPHGGGEGKTSGGRHPVSPWGVPTKGYKTRSNKRTDKFIVRRRAK.

The disordered stretch occupies residues 223–274 (VAMNPVDHPHGGGEGKTSGGRHPVSPWGVPTKGYKTRSNKRTDKFIVRRRAK).

Belongs to the universal ribosomal protein uL2 family. In terms of assembly, part of the 50S ribosomal subunit. Forms a bridge to the 30S subunit in the 70S ribosome.

Functionally, one of the primary rRNA binding proteins. Required for association of the 30S and 50S subunits to form the 70S ribosome, for tRNA binding and peptide bond formation. It has been suggested to have peptidyltransferase activity; this is somewhat controversial. Makes several contacts with the 16S rRNA in the 70S ribosome. The chain is Large ribosomal subunit protein uL2 from Colwellia psychrerythraea (strain 34H / ATCC BAA-681) (Vibrio psychroerythus).